The primary structure comprises 148 residues: D-aminoacyl-tRNA deacylase (148 aa).

A Gly-cisPro motif, important for rejection of L-amino acids motif is present at residues 137–138 (GP).

This sequence belongs to the DTD family. As to quaternary structure, homodimer.

The protein resides in the cytoplasm. It carries out the reaction glycyl-tRNA(Ala) + H2O = tRNA(Ala) + glycine + H(+). It catalyses the reaction a D-aminoacyl-tRNA + H2O = a tRNA + a D-alpha-amino acid + H(+). Its function is as follows. An aminoacyl-tRNA editing enzyme that deacylates mischarged D-aminoacyl-tRNAs. Also deacylates mischarged glycyl-tRNA(Ala), protecting cells against glycine mischarging by AlaRS. Acts via tRNA-based rather than protein-based catalysis; rejects L-amino acids rather than detecting D-amino acids in the active site. By recycling D-aminoacyl-tRNA to D-amino acids and free tRNA molecules, this enzyme counteracts the toxicity associated with the formation of D-aminoacyl-tRNA entities in vivo and helps enforce protein L-homochirality. The protein is D-aminoacyl-tRNA deacylase of Latilactobacillus sakei subsp. sakei (strain 23K) (Lactobacillus sakei subsp. sakei).